The following is a 388-amino-acid chain: tRNA (guanine(26)-N(2))-dimethyltransferase (388 aa).

In terms of domain architecture, Trm1 methyltransferase spans 4-383 (KTIVEGTTKV…APITEIKEII (380 aa)). 4 residues coordinate S-adenosyl-L-methionine: Arg41, Arg78, Asp94, and Ala123. Zn(2+) contacts are provided by Cys251, Cys254, Cys271, and Cys274.

Belongs to the class I-like SAM-binding methyltransferase superfamily. Trm1 family.

The catalysed reaction is guanosine(26) in tRNA + 2 S-adenosyl-L-methionine = N(2)-dimethylguanosine(26) in tRNA + 2 S-adenosyl-L-homocysteine + 2 H(+). Dimethylates a single guanine residue at position 26 of a number of tRNAs using S-adenosyl-L-methionine as donor of the methyl groups. In Methanosarcina barkeri (strain Fusaro / DSM 804), this protein is tRNA (guanine(26)-N(2))-dimethyltransferase.